The sequence spans 153 residues: Small ribosomal subunit protein uS19 (153 aa).

It belongs to the universal ribosomal protein uS19 family.

This is Small ribosomal subunit protein uS19 (RPS15) from Elaeis oleifera (American oil palm).